The following is a 107-amino-acid chain: Probable monothiol glutaredoxin 2 (107 aa).

In terms of domain architecture, Glutaredoxin spans 7 to 107 (FKFIENEIKN…LEKMLKAYTR (101 aa)). Lys-24 serves as a coordination point for glutathione. Cys-32 serves as a coordination point for [2Fe-2S] cluster. Glutathione contacts are provided by residues Arg-61, Phe-73, and 86 to 87 (CD).

The protein belongs to the glutaredoxin family. Monothiol subfamily.

In Rickettsia conorii (strain ATCC VR-613 / Malish 7), this protein is Probable monothiol glutaredoxin 2 (grxC2).